A 346-amino-acid polypeptide reads, in one-letter code: STE20-related kinase adapter protein stlk (346 aa).

A Protein kinase domain is found at 10 to 298; the sequence is YKLLEILKNG…ASKLMTHSFL (289 aa). Residues 16-24 and K38 each bind ATP; that span reads LKNGMIGTV.

It belongs to the protein kinase superfamily. STE Ser/Thr protein kinase family. STE20 subfamily.

The polypeptide is STE20-related kinase adapter protein stlk (Drosophila melanogaster (Fruit fly)).